Here is a 355-residue protein sequence, read N- to C-terminus: Guanine nucleotide-binding protein G(i) subunit alpha-2 (355 aa).

The N-myristoyl glycine moiety is linked to residue G2. C3 carries the S-palmitoyl cysteine lipid modification. The region spanning 32 to 355 (REVKLLLLGA…KNNLKDCGLF (324 aa)) is the G-alpha domain. Residues 35-48 (KLLLLGAGESGKST) are G1 motif. Residues 40 to 47 (GAGESGKS), 176 to 182 (LRTRVKT), 201 to 205 (DVGGQ), 270 to 273 (NKKD), and A327 contribute to the GTP site. Positions 47 and 182 each coordinate Mg(2+). A G2 motif region spans residues 174-182 (DVLRTRVKT). A G3 motif region spans residues 197-206 (FKMFDVGGQR). Residues 266-273 (ILFLNKKD) are G4 motif. The G5 motif stretch occupies residues 325–330 (TCATDT).

It belongs to the G-alpha family. G(i/o/t/z) subfamily. In terms of assembly, g proteins are composed of 3 units; alpha, beta and gamma. The alpha chain contains the guanine nucleotide binding site.

It is found in the cytoplasm. The protein localises to the cytoskeleton. It localises to the microtubule organizing center. The protein resides in the centrosome. Its subcellular location is the cell membrane. Guanine nucleotide-binding proteins (G proteins) are involved as modulators or transducers in various transmembrane signaling systems. The G(i) proteins are involved in hormonal regulation of adenylate cyclase: they inhibit the cyclase in response to beta-adrenergic stimuli. May play a role in cell division. This Oryzias latipes (Japanese rice fish) protein is Guanine nucleotide-binding protein G(i) subunit alpha-2 (gnai2).